Consider the following 265-residue polypeptide: Glutamate racemase (265 aa).

Residues 9 to 10 (DS) and 41 to 42 (YG) contribute to the substrate site. The active-site Proton donor/acceptor is the Cys-72. 73-74 (NT) provides a ligand contact to substrate. Residue Cys-183 is the Proton donor/acceptor of the active site. 184 to 185 (TH) is a substrate binding site.

Belongs to the aspartate/glutamate racemases family.

The catalysed reaction is L-glutamate = D-glutamate. It functions in the pathway cell wall biogenesis; peptidoglycan biosynthesis. Functionally, provides the (R)-glutamate required for cell wall biosynthesis. This Lysinibacillus sphaericus (strain C3-41) protein is Glutamate racemase.